We begin with the raw amino-acid sequence, 72 residues long: UPF0352 protein SO_2176 (72 aa).

This sequence belongs to the UPF0352 family.

This is UPF0352 protein SO_2176 from Shewanella oneidensis (strain ATCC 700550 / JCM 31522 / CIP 106686 / LMG 19005 / NCIMB 14063 / MR-1).